Here is a 220-residue protein sequence, read N- to C-terminus: UPF0502 protein CV_4303 (220 aa).

Belongs to the UPF0502 family.

The sequence is that of UPF0502 protein CV_4303 from Chromobacterium violaceum (strain ATCC 12472 / DSM 30191 / JCM 1249 / CCUG 213 / NBRC 12614 / NCIMB 9131 / NCTC 9757 / MK).